A 342-amino-acid polypeptide reads, in one-letter code: 6-hydroxytryprostatin B O-methyltransferase (342 aa).

Asp201 contacts S-adenosyl-L-methionine. Residue His244 is the Proton acceptor of the active site.

The protein belongs to the class I-like SAM-binding methyltransferase superfamily. Cation-independent O-methyltransferase family. As to quaternary structure, homodimer.

The enzyme catalyses 6-hydroxytryprostatin B + S-adenosyl-L-methionine = tryprostatin A + S-adenosyl-L-homocysteine + H(+). It functions in the pathway alkaloid biosynthesis. Its function is as follows. 6-hydroxytryprostatin B O-methyltransferase; part of the gene cluster that mediates the biosynthesis of fumitremorgins, indole alkaloids that carry not only intriguing chemical structures, but also interesting biological and pharmacological activities. The biosynthesis of fumitremorgin-type alkaloids begins by condensation of the two amino acids L-tryptophan and L-proline to brevianamide F, catalyzed by the non-ribosomal peptide synthetase ftmA. Brevianamide F is then prenylated by the prenyltransferase ftmPT1/ftmB in the presence of dimethylallyl diphosphate, resulting in the formation of tryprostatin B. The three cytochrome P450 monooxygenases, ftmP450-1/ftmC, ftmP450-2/ftmE and ftmP450-3/FtmG, are responsible for the conversion of tryprostatin B to 6-hydroxytryprostatin B, tryprostatin A to fumitremorgin C and fumitremorgin C to 12,13-dihydroxyfumitremorgin C, respectively. The putative methyltransferase ftmMT/ftmD is expected for the conversion of 6-hydroxytryprostatin B to tryprostatin A. FtmPT2/FtmH catalyzes the prenylation of 12,13-dihydroxyfumitre-morgin C in the presence of dimethylallyl diphosphate, resulting in the formation of fumitremorgin B. Fumitremorgin B is further converted to verruculogen by ftmOx1/ftmF via the insertion of an endoperoxide bond between the two prenyl moieties. In some fungal species, verruculogen is further converted to fumitremorgin A, but the enzymes involved in this step have not been identified yet. The chain is 6-hydroxytryprostatin B O-methyltransferase from Aspergillus fumigatus (Neosartorya fumigata).